Consider the following 157-residue polypeptide: Phosphopantetheine adenylyltransferase (157 aa).

Residue Ser-8 participates in substrate binding. ATP-binding positions include 8-9 (SF) and His-16. 3 residues coordinate substrate: Lys-40, Thr-72, and Arg-86. ATP is bound by residues 87–89 (GLR), Glu-97, and 122–128 (HSFLSSS).

The protein belongs to the bacterial CoaD family. Homohexamer. Mg(2+) is required as a cofactor.

The protein localises to the cytoplasm. The catalysed reaction is (R)-4'-phosphopantetheine + ATP + H(+) = 3'-dephospho-CoA + diphosphate. It participates in cofactor biosynthesis; coenzyme A biosynthesis; CoA from (R)-pantothenate: step 4/5. In terms of biological role, reversibly transfers an adenylyl group from ATP to 4'-phosphopantetheine, yielding dephospho-CoA (dPCoA) and pyrophosphate. The sequence is that of Phosphopantetheine adenylyltransferase from Prochlorococcus marinus (strain MIT 9313).